The following is a 398-amino-acid chain: Phosphoglycerate kinase (398 aa).

Substrate contacts are provided by residues 23–25 (DLN), R38, 61–64 (HFGR), R119, and R152. Residues K202, E324, and 354–357 (GGDT) each bind ATP.

Belongs to the phosphoglycerate kinase family. As to quaternary structure, monomer.

The protein resides in the cytoplasm. It catalyses the reaction (2R)-3-phosphoglycerate + ATP = (2R)-3-phospho-glyceroyl phosphate + ADP. It participates in carbohydrate degradation; glycolysis; pyruvate from D-glyceraldehyde 3-phosphate: step 2/5. In Bradyrhizobium diazoefficiens (strain JCM 10833 / BCRC 13528 / IAM 13628 / NBRC 14792 / USDA 110), this protein is Phosphoglycerate kinase.